The primary structure comprises 263 residues: MILDEIIEKTKEDLILRKEKLNFEELEKKLKTINSKPKDVKTFLKSTKEEPIRIIAEVKKASPSKGIIKEDFNPLEIALEYSQNGANAISVLTEPHYFKGNLEYLSTIKNSVSTPLLRKDFIVDKYQIAEALLYGADFILLIAKALNEKELKELYEYARSLDLEVLVEIHDNEDLTKALNSNATIIGINHRNLGTFEMDMALCDKLIPLIPKDKIIVAESGVSDTEVIKRLHNVGADAFLIGEHFMRVPSIKDELTKFKNTLN.

It belongs to the TrpC family.

It carries out the reaction 1-(2-carboxyphenylamino)-1-deoxy-D-ribulose 5-phosphate + H(+) = (1S,2R)-1-C-(indol-3-yl)glycerol 3-phosphate + CO2 + H2O. It functions in the pathway amino-acid biosynthesis; L-tryptophan biosynthesis; L-tryptophan from chorismate: step 4/5. This chain is Indole-3-glycerol phosphate synthase, found in Aliarcobacter butzleri (strain RM4018) (Arcobacter butzleri).